A 984-amino-acid chain; its full sequence is G patch domain-containing protein TGH homolog (984 aa).

Over residues Glu-130–Pro-144 the composition is skewed to basic and acidic residues. The disordered stretch occupies residues Glu-130–Asp-153. The region spanning Thr-160–Ser-202 is the G-patch domain. An SURP motif repeat occupies Leu-408–Ala-450. 4 disordered regions span residues Gln-464 to Pro-503, Thr-679 to Ser-717, Leu-775 to Arg-806, and Glu-820 to Arg-984. Basic and acidic residues predominate over residues Ser-473–Thr-495. Residues Thr-679–Ser-695 are compositionally biased toward polar residues. The segment covering Ala-697–Thr-709 has biased composition (low complexity). Residues Gln-814 to Ser-859 adopt a coiled-coil conformation. Residues Leu-843–Arg-858 show a composition bias toward basic and acidic residues. Composition is skewed to basic residues over residues Ser-882–Arg-892, His-905–Arg-922, and Thr-934–Thr-946. Positions Arg-947 to Arg-974 are enriched in basic and acidic residues. Positions Ser-975–Arg-984 are enriched in basic residues.

The protein resides in the nucleus. Functions as a component of microRNA (miRNA) and small interfering RNA (siRNA) biogenesis. May assist Dicer-like (DCL) proteins to efficiently process and/or recruit the precursors of miRNAs and siRNAs. The sequence is that of G patch domain-containing protein TGH homolog from Oryza sativa subsp. japonica (Rice).